The primary structure comprises 122 residues: S-adenosylmethionine decarboxylase proenzyme (122 aa).

The active-site Schiff-base intermediate with substrate; via pyruvic acid is the Ser69. Pyruvic acid (Ser); by autocatalysis is present on Ser69. The Proton acceptor; for processing activity role is filled by His74. Cys89 (proton donor; for catalytic activity) is an active-site residue.

It belongs to the prokaryotic AdoMetDC family. Type 1 subfamily. As to quaternary structure, heterotetramer of two alpha and two beta chains arranged as a dimer of alpha/beta heterodimers. Pyruvate serves as cofactor. Is synthesized initially as an inactive proenzyme. Formation of the active enzyme involves a self-maturation process in which the active site pyruvoyl group is generated from an internal serine residue via an autocatalytic post-translational modification. Two non-identical subunits are generated from the proenzyme in this reaction, and the pyruvate is formed at the N-terminus of the alpha chain, which is derived from the carboxyl end of the proenzyme. The post-translation cleavage follows an unusual pathway, termed non-hydrolytic serinolysis, in which the side chain hydroxyl group of the serine supplies its oxygen atom to form the C-terminus of the beta chain, while the remainder of the serine residue undergoes an oxidative deamination to produce ammonia and the pyruvoyl group blocking the N-terminus of the alpha chain.

The enzyme catalyses S-adenosyl-L-methionine + H(+) = S-adenosyl 3-(methylsulfanyl)propylamine + CO2. Its pathway is amine and polyamine biosynthesis; S-adenosylmethioninamine biosynthesis; S-adenosylmethioninamine from S-adenosyl-L-methionine: step 1/1. Functionally, catalyzes the decarboxylation of S-adenosylmethionine to S-adenosylmethioninamine (dcAdoMet), the propylamine donor required for the synthesis of the polyamines spermine and spermidine from the diamine putrescine. In Sulfurisphaera tokodaii (strain DSM 16993 / JCM 10545 / NBRC 100140 / 7) (Sulfolobus tokodaii), this protein is S-adenosylmethionine decarboxylase proenzyme.